A 200-amino-acid chain; its full sequence is Dual specificity tyrosine-phosphorylation-regulated kinase 1A (200 aa).

Y41 carries the phosphotyrosine; by autocatalysis modification. K58 serves as a coordination point for ATP. Y76 bears the Phosphotyrosine; by autocatalysis mark. S88 is modified (phosphoserine; by autocatalysis). The residue at position 122 (T122) is a Phosphothreonine; by autocatalysis.

This sequence belongs to the protein kinase superfamily. CMGC Ser/Thr protein kinase family. MNB/DYRK subfamily. In terms of assembly, interacts with RAD54L2/ARIP4. Interacts with CRY2. Interacts with RANBP9. Interacts with WDR68. Interacts with SIRT1. Post-translationally, can also autophosphorylate on serine and threonine residues (in vitro). Autophosphorylated on numerous tyrosine residues.

The protein resides in the nucleus. It carries out the reaction L-tyrosyl-[protein] + ATP = O-phospho-L-tyrosyl-[protein] + ADP + H(+). The enzyme catalyses L-seryl-[protein] + ATP = O-phospho-L-seryl-[protein] + ADP + H(+). It catalyses the reaction L-threonyl-[protein] + ATP = O-phospho-L-threonyl-[protein] + ADP + H(+). The catalysed reaction is [DNA-directed RNA polymerase] + ATP = phospho-[DNA-directed RNA polymerase] + ADP + H(+). With respect to regulation, inhibited by RANBP9. Dual-specificity kinase which possesses both serine/threonine and tyrosine kinase activities. Exhibits a substrate preference for proline at position P+1 and arginine at position P-3. Plays an important role in double-strand breaks (DSBs) repair following DNA damage. Mechanistically, phosphorylates RNF169 and increases its ability to block accumulation of TP53BP1 at the DSB sites thereby promoting homologous recombination repair (HRR). Also acts as a positive regulator of transcription by acting as a CTD kinase that mediates phosphorylation of the CTD (C-terminal domain) of the large subunit of RNA polymerase II (RNAP II) POLR2A. May play a role in a signaling pathway regulating nuclear functions of cell proliferation. Modulates alternative splicing by phosphorylating the splice factor SRSF6. Has pro-survival function and negatively regulates the apoptotic process. Promotes cell survival upon genotoxic stress through phosphorylation of SIRT1. This in turn inhibits p53/TP53 activity and apoptosis. Phosphorylates SEPTIN4, SEPTIN5 and SF3B1 at 'Thr-434'. This is Dual specificity tyrosine-phosphorylation-regulated kinase 1A from Oryctolagus cuniculus (Rabbit).